Reading from the N-terminus, the 175-residue chain is Methylated-DNA--protein-cysteine methyltransferase (175 aa).

The active-site Nucleophile; methyl group acceptor is Cys-142.

Belongs to the MGMT family.

The protein resides in the cytoplasm. It carries out the reaction a 6-O-methyl-2'-deoxyguanosine in DNA + L-cysteinyl-[protein] = S-methyl-L-cysteinyl-[protein] + a 2'-deoxyguanosine in DNA. The enzyme catalyses a 4-O-methyl-thymidine in DNA + L-cysteinyl-[protein] = a thymidine in DNA + S-methyl-L-cysteinyl-[protein]. Its function is as follows. Involved in the cellular defense against the biological effects of O6-methylguanine (O6-MeG) and O4-methylthymine (O4-MeT) in DNA. Repairs the methylated nucleobase in DNA by stoichiometrically transferring the methyl group to a cysteine residue in the enzyme. This is a suicide reaction: the enzyme is irreversibly inactivated. This chain is Methylated-DNA--protein-cysteine methyltransferase, found in Thermococcus sibiricus (strain DSM 12597 / MM 739).